Consider the following 251-residue polypeptide: Probable ATP-dependent transporter ycf16 (251 aa).

Positions 8–250 (LEIKNLKACI…ELESKGYEWL (243 aa)) constitute an ABC transporter domain. Residue 40–47 (GPNGSGKS) coordinates ATP.

This sequence belongs to the ABC transporter superfamily. Ycf16 family.

Its subcellular location is the plastid. The protein localises to the chloroplast. The sequence is that of Probable ATP-dependent transporter ycf16 (ycf16) from Trieres chinensis (Marine centric diatom).